We begin with the raw amino-acid sequence, 96 residues long: UPF0235 protein SO_3356 (96 aa).

It belongs to the UPF0235 family.

This chain is UPF0235 protein SO_3356, found in Shewanella oneidensis (strain ATCC 700550 / JCM 31522 / CIP 106686 / LMG 19005 / NCIMB 14063 / MR-1).